Here is a 101-residue protein sequence, read N- to C-terminus: Small ribosomal subunit protein uS14 (101 aa).

The disordered stretch occupies residues 1 to 21; it reads MAKTSAVEKNKRRRKSVAQQA.

It belongs to the universal ribosomal protein uS14 family. Part of the 30S ribosomal subunit. Contacts proteins S3 and S10.

In terms of biological role, binds 16S rRNA, required for the assembly of 30S particles and may also be responsible for determining the conformation of the 16S rRNA at the A site. The protein is Small ribosomal subunit protein uS14 of Agrobacterium fabrum (strain C58 / ATCC 33970) (Agrobacterium tumefaciens (strain C58)).